The following is a 158-amino-acid chain: Xanthine-guanine phosphoribosyltransferase (158 aa).

5-phospho-alpha-D-ribose 1-diphosphate is bound by residues 38-39 and 90-98; these read RG and DDLVDTGGT. Asp-91 provides a ligand contact to Mg(2+). The guanine site is built by Asp-94 and Ile-137. Residues Asp-94 and Ile-137 each contribute to the xanthine site. Residues 94-98 and 136-137 each bind GMP; these read DTGGT and WI.

The protein belongs to the purine/pyrimidine phosphoribosyltransferase family. XGPT subfamily. In terms of assembly, homotetramer. Mg(2+) is required as a cofactor.

Its subcellular location is the cell inner membrane. It catalyses the reaction GMP + diphosphate = guanine + 5-phospho-alpha-D-ribose 1-diphosphate. The catalysed reaction is XMP + diphosphate = xanthine + 5-phospho-alpha-D-ribose 1-diphosphate. The enzyme catalyses IMP + diphosphate = hypoxanthine + 5-phospho-alpha-D-ribose 1-diphosphate. It participates in purine metabolism; GMP biosynthesis via salvage pathway; GMP from guanine: step 1/1. It functions in the pathway purine metabolism; XMP biosynthesis via salvage pathway; XMP from xanthine: step 1/1. In terms of biological role, purine salvage pathway enzyme that catalyzes the transfer of the ribosyl-5-phosphate group from 5-phospho-alpha-D-ribose 1-diphosphate (PRPP) to the N9 position of the 6-oxopurines guanine and xanthine to form the corresponding ribonucleotides GMP (guanosine 5'-monophosphate) and XMP (xanthosine 5'-monophosphate), with the release of PPi. To a lesser extent, also acts on hypoxanthine. The protein is Xanthine-guanine phosphoribosyltransferase of Buchnera aphidicola subsp. Acyrthosiphon pisum (strain APS) (Acyrthosiphon pisum symbiotic bacterium).